The chain runs to 401 residues: Imidazolonepropionase (401 aa).

Fe(3+) is bound by residues histidine 70 and histidine 72. 2 residues coordinate Zn(2+): histidine 70 and histidine 72. 4-imidazolone-5-propanoate-binding residues include arginine 79, tyrosine 142, and histidine 175. An N-formimidoyl-L-glutamate-binding site is contributed by tyrosine 142. Fe(3+) is bound at residue histidine 238. Residue histidine 238 coordinates Zn(2+). Glutamine 241 contributes to the 4-imidazolone-5-propanoate binding site. Aspartate 313 contributes to the Fe(3+) binding site. Aspartate 313 serves as a coordination point for Zn(2+). The N-formimidoyl-L-glutamate site is built by asparagine 315 and glycine 317. Threonine 318 is a 4-imidazolone-5-propanoate binding site.

Belongs to the metallo-dependent hydrolases superfamily. HutI family. It depends on Zn(2+) as a cofactor. The cofactor is Fe(3+).

The protein localises to the cytoplasm. The enzyme catalyses 4-imidazolone-5-propanoate + H2O = N-formimidoyl-L-glutamate. Its pathway is amino-acid degradation; L-histidine degradation into L-glutamate; N-formimidoyl-L-glutamate from L-histidine: step 3/3. Catalyzes the hydrolytic cleavage of the carbon-nitrogen bond in imidazolone-5-propanoate to yield N-formimidoyl-L-glutamate. It is the third step in the universal histidine degradation pathway. The sequence is that of Imidazolonepropionase from Acidiphilium cryptum (strain JF-5).